The following is a 428-amino-acid chain: G2/mitotic-specific cyclin-B (428 aa).

The protein belongs to the cyclin family. Cyclin AB subfamily. Interacts with the CDC2 protein kinase to form a serine/threonine kinase holoenzyme complex also known as maturation promoting factor (MPF). The cyclin subunit imparts substrate specificity to the complex.

Its function is as follows. Essential for the control of the cell cycle at the G2/M (mitosis) transition. The polypeptide is G2/mitotic-specific cyclin-B (Spisula solidissima (Atlantic surf-clam)).